A 39-amino-acid chain; its full sequence is Conotoxin Cl14.5 (39 aa).

A propeptide spanning residues 1–16 (PVNEAGVERLFRALVG) is cleaved from the precursor. Proline 38 carries the proline amide modification.

Contains 2 disulfide bonds. As to expression, expressed by the venom duct.

The protein resides in the secreted. This is Conotoxin Cl14.5 from Californiconus californicus (California cone).